The chain runs to 394 residues: Elongation factor Tu (394 aa).

A tr-type G domain is found at 10–204; it reads KPHVNIGTIG…AVDSWIPLPE (195 aa). Positions 19 to 26 are G1; that stretch reads GHVDHGKT. GTP is bound at residue 19 to 26; it reads GHVDHGKT. Position 26 (threonine 26) interacts with Mg(2+). The G2 stretch occupies residues 60-64; it reads GITIN. The segment at 81–84 is G3; the sequence is DCPG. Residues 81–85 and 136–139 contribute to the GTP site; these read DCPGH and NKCD. The G4 stretch occupies residues 136 to 139; it reads NKCD. Residues 174 to 176 form a G5 region; that stretch reads SGL.

Belongs to the TRAFAC class translation factor GTPase superfamily. Classic translation factor GTPase family. EF-Tu/EF-1A subfamily. As to quaternary structure, monomer.

The protein resides in the cytoplasm. The catalysed reaction is GTP + H2O = GDP + phosphate + H(+). Its function is as follows. GTP hydrolase that promotes the GTP-dependent binding of aminoacyl-tRNA to the A-site of ribosomes during protein biosynthesis. The sequence is that of Elongation factor Tu from Ureaplasma urealyticum serovar 10 (strain ATCC 33699 / Western).